The sequence spans 62 residues: Potassium channel toxin gamma-KTx 1.1 (62 aa).

An N-terminal signal peptide occupies residues 1–20; that stretch reads MKVLILIMIIASLMIMGVEM. 4 cysteine pairs are disulfide-bonded: cysteine 25–cysteine 43, cysteine 31–cysteine 54, cysteine 40–cysteine 59, and cysteine 44–cysteine 61.

The protein belongs to the ergtoxin family. Gamma-KTx 1 subfamily. Post-translationally, after protein storage at -20 Celsius degrees during a couple of months, the Met-55 of a small number of toxins is naturally oxidized. This oxidized form is about three orders of magnitude less efficient (IC(50)=15 uM) than non-oxidized form. In terms of tissue distribution, expressed by the venom gland.

It localises to the secreted. Functionally, blocks human and rat Kv11.1/KCNH2/ERG1 and Kv11.3/KCNH7/ERG3, as well as rat (but not human) Kv11.2/KCNH6/ERG2 by binding to channel outer vestibule (S5P domain) with a 1:1 stoichiometry. Inhibition data are the following: hERG1 (reversible, IC(50)~7 nM), rERG1 (reversible, Kd=6.8 nM), rERG2 (irreversible, Kd=2.8 nM), hERG3 (irreversible, Kd=4.05 nM) and rERG3 (reversible, Kd=38.1 nM) potassium channels. The toxin potency is not affected by elevating potassium ion concentration from 2 to 98 mM. This toxin only blocks channels in a closed state. At high toxin concentrations, block of Kv11.1/KCNH2/ERG1 macroscopic current is incomplete (93.5%). This suggests a kinetic mechanism model with two different states of toxin-channel binding (T+C=TC*=TC; in the TC* state, the toxin binds the channel but does not occlude the pore, whereas in the TC state the toxin binds and occludes the pore). In this model, incomplete block is explained by the relatively fast dissociation rate from the blocked channel conformation (TC) relative to the rate of conversion of the toxin-channel encounter complex (TC*) to the blocked channel conformation (TC). This Centruroides noxius (Mexican scorpion) protein is Potassium channel toxin gamma-KTx 1.1.